The sequence spans 201 residues: Recombination protein RecR (201 aa).

The C4-type zinc finger occupies 57 to 72 (CRSCRTFTEEDECNIC). The region spanning 81 to 176 (GQLCVVEMPE…KVTRIAHGIP (96 aa)) is the Toprim domain.

This sequence belongs to the RecR family.

Its function is as follows. May play a role in DNA repair. It seems to be involved in an RecBC-independent recombinational process of DNA repair. It may act with RecF and RecO. This Actinobacillus pleuropneumoniae serotype 5b (strain L20) protein is Recombination protein RecR.